We begin with the raw amino-acid sequence, 109 residues long: Large ribosomal subunit protein uL22 (109 aa).

It belongs to the universal ribosomal protein uL22 family. Part of the 50S ribosomal subunit.

Its function is as follows. This protein binds specifically to 23S rRNA; its binding is stimulated by other ribosomal proteins, e.g. L4, L17, and L20. It is important during the early stages of 50S assembly. It makes multiple contacts with different domains of the 23S rRNA in the assembled 50S subunit and ribosome. Functionally, the globular domain of the protein is located near the polypeptide exit tunnel on the outside of the subunit, while an extended beta-hairpin is found that lines the wall of the exit tunnel in the center of the 70S ribosome. This is Large ribosomal subunit protein uL22 from Aromatoleum aromaticum (strain DSM 19018 / LMG 30748 / EbN1) (Azoarcus sp. (strain EbN1)).